A 409-amino-acid polypeptide reads, in one-letter code: Probable tRNA N6-adenosine threonylcarbamoyltransferase, mitochondrial (409 aa).

Residues 1–31 (MHALRNFAGNGIANVFGCGIRRRLSYVLGIE) constitute a mitochondrion transit peptide. A divalent metal cation contacts are provided by His135 and His139. Substrate-binding positions include 159-163 (LASGG), Asp192, Gly212, Glu216, 322-323 (NN), and Ser350. A divalent metal cation is bound at residue Asp351.

Belongs to the KAE1 / TsaD family. As to quaternary structure, homodimer. It depends on a divalent metal cation as a cofactor.

The protein localises to the mitochondrion. The enzyme catalyses L-threonylcarbamoyladenylate + adenosine(37) in tRNA = N(6)-L-threonylcarbamoyladenosine(37) in tRNA + AMP + H(+). Required for the formation of a threonylcarbamoyl group on adenosine at position 37 (t(6)A37) in mitochondrial tRNAs that read codons beginning with adenine. Probably involved in the transfer of the threonylcarbamoyl moiety of threonylcarbamoyl-AMP (TC-AMP) to the N6 group of A37. Involved in mitochondrial genome maintenance. The polypeptide is Probable tRNA N6-adenosine threonylcarbamoyltransferase, mitochondrial (Drosophila melanogaster (Fruit fly)).